The primary structure comprises 586 residues: DNA-directed RNA polymerase subunit beta' (586 aa).

4 residues coordinate Zn(2+): cysteine 64, cysteine 66, cysteine 85, and cysteine 88. Mg(2+)-binding residues include aspartate 448, aspartate 450, and aspartate 452.

The protein belongs to the RNA polymerase beta' chain family. RpoC1 subfamily. In terms of assembly, in plastids the minimal PEP RNA polymerase catalytic core is composed of four subunits: alpha, beta, beta', and beta''. When a (nuclear-encoded) sigma factor is associated with the core the holoenzyme is formed, which can initiate transcription. The cofactor is Mg(2+). Requires Zn(2+) as cofactor.

The protein localises to the plastid. It localises to the chloroplast. It carries out the reaction RNA(n) + a ribonucleoside 5'-triphosphate = RNA(n+1) + diphosphate. In terms of biological role, DNA-dependent RNA polymerase catalyzes the transcription of DNA into RNA using the four ribonucleoside triphosphates as substrates. This is DNA-directed RNA polymerase subunit beta' from Euglena gracilis.